An 85-amino-acid polypeptide reads, in one-letter code: HssA/B-like protein 62 (85 aa).

The protein belongs to the hssA/B family.

This Dictyostelium discoideum (Social amoeba) protein is HssA/B-like protein 62 (hssl62).